The chain runs to 78 residues: Protein SlyX homolog (78 aa).

The protein belongs to the SlyX family.

This Xanthomonas oryzae pv. oryzae (strain MAFF 311018) protein is Protein SlyX homolog.